We begin with the raw amino-acid sequence, 414 residues long: Glyceraldehyde-3-phosphate dehydrogenase, chloroplastic (414 aa).

Residues 1 to 76 constitute a chloroplast transit peptide; it reads MAFVAPVATV…GIVAATFGPT (76 aa). NADP(+) is bound by residues 88 to 89, Asp112, and Arg156; that span reads RI. D-glyceraldehyde 3-phosphate is bound by residues 230–232, Thr261, Arg276, 289–290, and Arg312; these read SCT and TG. The Nucleophile role is filled by Cys231. Asn394 is a binding site for NADP(+).

It belongs to the glyceraldehyde-3-phosphate dehydrogenase family. Homotetramer.

The protein localises to the plastid. It is found in the chloroplast. It carries out the reaction D-glyceraldehyde 3-phosphate + phosphate + NADP(+) = (2R)-3-phospho-glyceroyl phosphate + NADPH + H(+). Its pathway is carbohydrate biosynthesis; Calvin cycle. The sequence is that of Glyceraldehyde-3-phosphate dehydrogenase, chloroplastic (GAPA) from Chondrus crispus (Carrageen Irish moss).